The following is an 87-amino-acid chain: uncharacterized protein (87 aa).

Residues 44-64 form a helical membrane-spanning segment; that stretch reads DALYLAGSTIFTIVTTLVAWF.

Belongs to the SPP1 holin family.

It is found in the membrane. This is an uncharacterized protein from Bacillus licheniformis.